The chain runs to 230 residues: Large ribosomal subunit protein uL1 (230 aa).

It belongs to the universal ribosomal protein uL1 family. In terms of assembly, part of the 50S ribosomal subunit.

In terms of biological role, binds directly to 23S rRNA. The L1 stalk is quite mobile in the ribosome, and is involved in E site tRNA release. Protein L1 is also a translational repressor protein, it controls the translation of the L11 operon by binding to its mRNA. This chain is Large ribosomal subunit protein uL1, found in Nitrobacter winogradskyi (strain ATCC 25391 / DSM 10237 / CIP 104748 / NCIMB 11846 / Nb-255).